A 495-amino-acid polypeptide reads, in one-letter code: Keratin, type II cuticular 87 (495 aa).

Residues 1-111 are head; that stretch reads MSCFSSRLGA…PNAQCVKHEE (111 aa). In terms of domain architecture, IF rod spans 111–422; the sequence is EKEQIKCLNS…RLLEGEEQRL (312 aa). Positions 112–146 are coil 1A; that stretch reads KEQIKCLNSKFAAFIDKVRFLEQQNKLLETKWQFY. The interval 147 to 156 is linker 1; that stretch reads QNRKCCESNM. Residues 157 to 257 form a coil 1B region; sequence EPLFEGYIEA…YEEETRLLHS (101 aa). The tract at residues 258 to 274 is linker 12; sequence HISDTSVVVKMDNSRDL. The interval 275-418 is coil 2; it reads NMDCVVAEIK…ITYRRLLEGE (144 aa). The tract at residues 419-494 is tail; sequence EQRLCEGVGS…TCGSSRSVRF (76 aa).

The protein belongs to the intermediate filament family. As to quaternary structure, heterotetramer of two type I and two type II keratins.

This is Keratin, type II cuticular 87 from Mus musculus (Mouse).